The primary structure comprises 522 residues: MKLPKHLKFAAGAGGAFLFGILFGWVMFPAILKGQLKKEMALSKKTDVRKMWETIPFALNFKVYLYNYTNPEEVQKGGVPIIKEVGPYHFDEWKEKVEIEDHEEDDTITYKKRDTFYFNQEKSGPGLTGEEVITMPHVFMLAMATVVSREKPAMMNMIGKAINGIFDNPADVFIRVKALDIMFRGTMINCARTEFAPKAVCTALKKEAVNGLVMEPNNQFRFSLFGSRNGTIDPHVVTVKRGIKNVMDVGQVVAIDGKPQQDVWRDHCNEYQGTDGTVFPPFLTEHDRLQSFSGDLCRSFKPWYQKKSFYRGITTHRYIANIGDFANDPELNCFCDGPCPPKGLMDLMKCMKAPMYASMPHFLDSDPELLKNVKGLNPDVNEHGIEIDFEPISGTPMVANQRVQFNMQLLKHDKVELLNNLPDTIVPLFWIDEGLALNKTFVNMLKFQLFYPKKAVGVIKWLLVTFGGFGLIGCTIYHYKDRIMSFASSPGSAAVTKVKPEEVEQKDVSVIGQPQEPAKINM.

Residues 1–11 (MKLPKHLKFAA) lie on the Cytoplasmic side of the membrane. A helical transmembrane segment spans residues 12–32 (GAGGAFLFGILFGWVMFPAIL). The Extracellular segment spans residues 33 to 455 (KGQLKKEMAL…KFQLFYPKKA (423 aa)). Asn67 and Asn229 each carry an N-linked (GlcNAc...) asparagine glycan. Disulfide bonds link Cys268-Cys333, Cys297-Cys350, and Cys335-Cys339. N-linked (GlcNAc...) asparagine glycosylation is present at Asn438. The helical transmembrane segment at 456–476 (VGVIKWLLVTFGGFGLIGCTI) threads the bilayer. Topologically, residues 477–522 (YHYKDRIMSFASSPGSAAVTKVKPEEVEQKDVSVIGQPQEPAKINM) are cytoplasmic.

This sequence belongs to the CD36 family.

The protein resides in the cell membrane. In terms of biological role, plays an olfactory role that is not restricted to pheromone sensitivity. This chain is Sensory neuron membrane protein 1, found in Plutella xylostella (Diamondback moth).